Consider the following 88-residue polypeptide: Probable oxaloacetate decarboxylase gamma chain (88 aa).

A helical membrane pass occupies residues 13-35 (LMFSGMGFVIIFLLILIWAIGIV).

Belongs to the OadG family. As to quaternary structure, heterotrimer of an alpha, a beta and a gamma subunit. Na(+) serves as cofactor.

The protein resides in the cell membrane. The catalysed reaction is oxaloacetate + 2 Na(+)(in) + H(+) = pyruvate + 2 Na(+)(out) + CO2. Its function is as follows. Catalyzes the decarboxylation of oxaloacetate coupled to Na(+) translocation. This is Probable oxaloacetate decarboxylase gamma chain from Mannheimia succiniciproducens (strain KCTC 0769BP / MBEL55E).